A 104-amino-acid polypeptide reads, in one-letter code: Large ribosomal subunit protein uL24 (104 aa).

Belongs to the universal ribosomal protein uL24 family. Part of the 50S ribosomal subunit.

In terms of biological role, one of two assembly initiator proteins, it binds directly to the 5'-end of the 23S rRNA, where it nucleates assembly of the 50S subunit. Its function is as follows. One of the proteins that surrounds the polypeptide exit tunnel on the outside of the subunit. The protein is Large ribosomal subunit protein uL24 of Ectopseudomonas mendocina (strain ymp) (Pseudomonas mendocina).